The following is a 455-amino-acid chain: Argininosuccinate lyase (455 aa).

This sequence belongs to the lyase 1 family. Argininosuccinate lyase subfamily.

The protein localises to the cytoplasm. The catalysed reaction is 2-(N(omega)-L-arginino)succinate = fumarate + L-arginine. Its pathway is amino-acid biosynthesis; L-arginine biosynthesis; L-arginine from L-ornithine and carbamoyl phosphate: step 3/3. This Shewanella sp. (strain ANA-3) protein is Argininosuccinate lyase.